Consider the following 322-residue polypeptide: UDP-N-acetylenolpyruvoylglucosamine reductase (322 aa).

One can recognise an FAD-binding PCMH-type domain in the interval 36–202 (RAGGPAQVLF…TSVLFEGVPG (167 aa)). The active site involves Arg182. The active-site Proton donor is the Ser231. Glu301 is an active-site residue.

It belongs to the MurB family. It depends on FAD as a cofactor.

The protein localises to the cytoplasm. It catalyses the reaction UDP-N-acetyl-alpha-D-muramate + NADP(+) = UDP-N-acetyl-3-O-(1-carboxyvinyl)-alpha-D-glucosamine + NADPH + H(+). It functions in the pathway cell wall biogenesis; peptidoglycan biosynthesis. Functionally, cell wall formation. The chain is UDP-N-acetylenolpyruvoylglucosamine reductase from Brucella suis (strain ATCC 23445 / NCTC 10510).